Here is a 199-residue protein sequence, read N- to C-terminus: Charged multivesicular body protein 1B2 (199 aa).

Positions 15–47 (AKELNRNAKKCDKEEKAEKAKIKKAIQKGNTEV) form a coiled coil. The interaction with IST1 stretch occupies residues 132–156 (MEDTMSSTTTLTTPQNQVDMLLQEM). Positions 167–199 (ELPQGQTGSVGASVASTEQDELSQRLARLRDQV) are disordered. Residues 170-183 (QGQTGSVGASVAST) are compositionally biased toward polar residues. Positions 174–199 (GSVGASVASTEQDELSQRLARLRDQV) are interaction with SPAST. Residues 177 to 199 (GASVASTEQDELSQRLARLRDQV) are a coiled coil. The segment at 180–196 (VASTEQDELSQRLARLR) is interaction with VPS4A, MITD1 and STAMBP. The tract at residues 180–199 (VASTEQDELSQRLARLRDQV) is interaction with VTA1. Residues 183–199 (TEQDELSQRLARLRDQV) form an interaction with VPS4B region. The MIT-interacting motif motif lies at 186–196 (DELSQRLARLR).

The protein belongs to the SNF7 family. In terms of assembly, probable peripherally associated component of the endosomal sorting required for transport complex III (ESCRT-III). ESCRT-III components are thought to multimerize to form a flat lattice on the perimeter membrane of the endosome. Several assembly forms of ESCRT-III may exist that interact and act sequentially. Interacts with CHMP1A. Interacts with VTA1; the interaction probably involves the open conformation of CHMP1B. Interacts with CHMP2A. Interacts with VPS4A; the interaction is direct. Interacts with VPS4B; the interaction is direct. Interacts with SPAST (via MIT domain); the interaction is direct. Interacts with IST1. Interacts with MITD1. Interacts with STAMBP.

Its subcellular location is the cytoplasm. The protein resides in the cytosol. It localises to the endosome. The protein localises to the late endosome membrane. Functionally, probable peripherally associated component of the endosomal sorting required for transport complex III (ESCRT-III) which is involved in multivesicular bodies (MVBs) formation and sorting of endosomal cargo proteins into MVBs. MVBs contain intraluminal vesicles (ILVs) that are generated by invagination and scission from the limiting membrane of the endosome and mostly are delivered to lysosomes enabling degradation of membrane proteins, such as stimulated growth factor receptors, lysosomal enzymes and lipids. The MVB pathway appears to require the sequential function of ESCRT-O, -I,-II and -III complexes. ESCRT-III proteins mostly dissociate from the invaginating membrane before the ILV is released. The ESCRT machinery also functions in topologically equivalent membrane fission events, such as the terminal stages of cytokinesis. ESCRT-III proteins are believed to mediate the necessary vesicle extrusion and/or membrane fission activities, possibly in conjunction with the AAA ATPase VPS4. Involved in cytokinesis. Involved in recruiting VPS4A and/or VPS4B and SPAST to the midbody of dividing cells. This is Charged multivesicular body protein 1B2 from Mus musculus (Mouse).